Here is a 488-residue protein sequence, read N- to C-terminus: Histamine H1 receptor (488 aa).

At Met1–Pro29 the chain is on the extracellular side. 2 N-linked (GlcNAc...) asparagine glycosylation sites follow: Asn5 and Asn18. A helical transmembrane segment spans residues Leu30–Tyr50. At Ala51–Leu64 the chain is on the cytoplasmic side. The helical transmembrane segment at Tyr65 to Ile89 threads the bilayer. The Extracellular portion of the chain corresponds to Met90 to Arg97. The chain crosses the membrane as a helical span at residues Pro98–Ile123. The cysteines at positions 100 and 180 are disulfide-linked. Histamine contacts are provided by Asp107 and Thr112. Residues Asp107–Thr112 form an important for agonist binding region. The Cytoplasmic portion of the chain corresponds to Asp124–Ala144. A phosphothreonine mark is found at Thr140 and Thr142. The chain crosses the membrane as a helical span at residues Ser145–Gly164. The Extracellular portion of the chain corresponds to Trp165–Thr188. A helical membrane pass occupies residues Trp189–Val211. Asn198 provides a ligand contact to histamine. Residues Lys212–Gln417 are Cytoplasmic-facing. Residue Ser230 is modified to Phosphoserine. The disordered stretch occupies residues Lys245–Leu337. The span at Ala322 to Leu337 shows a compositional bias: polar residues. Residues Ser344, Ser347, Ser381, Ser383, Ser397, and Ser399 each carry the phosphoserine modification. A helical transmembrane segment spans residues Leu418–Phe441. The important for agonist binding stretch occupies residues Phe425–Trp429. A histamine-binding site is contributed by Tyr432. Residues Cys442 and Cys445 are joined by a disulfide bond. Topologically, residues Cys442–Ser447 are extracellular. The chain crosses the membrane as a helical span at residues Glu448 to Pro470. The Cytoplasmic portion of the chain corresponds to Leu471–Ser488.

Belongs to the G-protein coupled receptor 1 family. Phosphorylation at sites in the second and third cytoplasmic loops independently contribute to agonist-induced receptor down-regulation.

Its subcellular location is the cell membrane. Its function is as follows. G-protein-coupled receptor for histamine, a biogenic amine that functions as an immune modulator and a neurotransmitter. Through the H1 receptor, histamine mediates the contraction of smooth muscles and increases capillary permeability due to contraction of terminal venules. Also mediates neurotransmission in the central nervous system and thereby regulates circadian rhythms, emotional and locomotor activities as well as cognitive functions. This chain is Histamine H1 receptor, found in Mus musculus (Mouse).